A 723-amino-acid chain; its full sequence is Threonine--tRNA ligase 1, cytoplasmic (723 aa).

The segment covering M1–S10 has biased composition (polar residues). The interval M1–P49 is disordered. Residues M13 to S39 show a composition bias toward basic and acidic residues. S39 carries the post-translational modification Phosphoserine. The 65-residue stretch at D79 to K143 folds into the TGS domain. K243 is subject to N6-acetyllysine. The residue at position 246 (T246) is a Phosphothreonine. At Y298 the chain carries Phosphotyrosine. T453 bears the Phosphothreonine mark. At S702 the chain carries Phosphoserine.

The protein belongs to the class-II aminoacyl-tRNA synthetase family. In terms of assembly, homodimer. In terms of processing, ISGylated.

It is found in the cytoplasm. It catalyses the reaction tRNA(Thr) + L-threonine + ATP = L-threonyl-tRNA(Thr) + AMP + diphosphate + H(+). In terms of biological role, catalyzes the attachment of threonine to tRNA(Thr) in a two-step reaction: threonine is first activated by ATP to form Thr-AMP and then transferred to the acceptor end of tRNA(Thr). Also edits incorrectly charged tRNA(Thr) via its editing domain, at the post-transfer stage. The polypeptide is Threonine--tRNA ligase 1, cytoplasmic (TARS1) (Bos taurus (Bovine)).